Reading from the N-terminus, the 443-residue chain is Glutamate-1-semialdehyde 2,1-aminomutase (443 aa).

Residue Lys-281 is modified to N6-(pyridoxal phosphate)lysine.

The protein belongs to the class-III pyridoxal-phosphate-dependent aminotransferase family. HemL subfamily. As to quaternary structure, homodimer. It depends on pyridoxal 5'-phosphate as a cofactor.

It is found in the cytoplasm. It carries out the reaction (S)-4-amino-5-oxopentanoate = 5-aminolevulinate. Its pathway is porphyrin-containing compound metabolism; protoporphyrin-IX biosynthesis; 5-aminolevulinate from L-glutamyl-tRNA(Glu): step 2/2. The sequence is that of Glutamate-1-semialdehyde 2,1-aminomutase from Leptospira interrogans serogroup Icterohaemorrhagiae serovar Lai (strain 56601).